The primary structure comprises 376 residues: Succinyl-diaminopimelate desuccinylase (376 aa).

His-67 serves as a coordination point for Zn(2+). Residue Asp-69 is part of the active site. A Zn(2+)-binding site is contributed by Asp-100. Glu-134 (proton acceptor) is an active-site residue. 3 residues coordinate Zn(2+): Glu-135, Glu-163, and His-349.

It belongs to the peptidase M20A family. DapE subfamily. Homodimer. Zn(2+) serves as cofactor. It depends on Co(2+) as a cofactor.

The enzyme catalyses N-succinyl-(2S,6S)-2,6-diaminopimelate + H2O = (2S,6S)-2,6-diaminopimelate + succinate. The protein operates within amino-acid biosynthesis; L-lysine biosynthesis via DAP pathway; LL-2,6-diaminopimelate from (S)-tetrahydrodipicolinate (succinylase route): step 3/3. Its function is as follows. Catalyzes the hydrolysis of N-succinyl-L,L-diaminopimelic acid (SDAP), forming succinate and LL-2,6-diaminopimelate (DAP), an intermediate involved in the bacterial biosynthesis of lysine and meso-diaminopimelic acid, an essential component of bacterial cell walls. The protein is Succinyl-diaminopimelate desuccinylase of Pseudoalteromonas translucida (strain TAC 125).